An 893-amino-acid polypeptide reads, in one-letter code: TBC domain-containing protein kinase-like protein (893 aa).

A Protein kinase domain is found at 1–273 (MFPLKDAEMG…PDELMKDQVF (273 aa)). In terms of domain architecture, Rab-GAP TBC spans 466 to 651 (DIPPLMRGLT…HLWDTLLLGN (186 aa)).

Belongs to the protein kinase superfamily. In terms of assembly, component of the FERRY complex composed of five subunits, TBCK, PPP1R21, FERRY3, CRYZL1 and GATD1 with a ratio of 1:2:1:2:4, respectively.

The protein resides in the cytoplasm. It localises to the cytoskeleton. It is found in the spindle. Its subcellular location is the midbody. The protein localises to the early endosome. Its function is as follows. Component of the FERRY complex (Five-subunit Endosomal Rab5 and RNA/ribosome intermediary). The FERRY complex directly interacts with mRNAs and RAB5A, and functions as a RAB5A effector involved in the localization and the distribution of specific mRNAs most likely by mediating their endosomal transport. The complex recruits mRNAs and ribosomes to early endosomes through direct mRNA-interaction. Also involved in the modulation of mTOR signaling and expression of mTOR complex components. Involved in the control of actin-cytoskeleton organization. In Mus musculus (Mouse), this protein is TBC domain-containing protein kinase-like protein (Tbck).